A 536-amino-acid polypeptide reads, in one-letter code: Alpha-1,3-mannosyl-glycoprotein 4-beta-N-acetylglucosaminyltransferase A (536 aa).

Over 1 to 6 (MRLRNG) the chain is Cytoplasmic. A helical; Signal-anchor for type II membrane protein transmembrane segment spans residues 7–27 (TVATALVFITTFLSLSWYTAW). Residues 28-54 (QNGKEKLMAYQREFHALKERLRIAEHR) are a coiled coil. At 28-536 (QNGKEKLMAY…EIHIKRNPAD (509 aa)) the chain is on the lumenal side. N-linked (GlcNAc...) asparagine glycans are attached at residues Asn77 and Asn458.

The protein belongs to the glycosyltransferase 54 family. It depends on a divalent metal cation as a cofactor. Post-translationally, N-glycosylated.

The protein resides in the golgi apparatus membrane. The protein localises to the secreted. It catalyses the reaction N(4)-{beta-D-GlcNAc-(1-&gt;2)-alpha-D-Man-(1-&gt;3)-[beta-D-GlcNAc-(1-&gt;2)-alpha-D-Man-(1-&gt;6)]-beta-D-Man-(1-&gt;4)-beta-D-GlcNAc-(1-&gt;4)-beta-D-GlcNAc}-L-asparaginyl-[protein] + UDP-N-acetyl-alpha-D-glucosamine = N(4)-{beta-D-GlcNAc-(1-&gt;2)-[beta-D-GlcNAc-(1-&gt;4)]-alpha-D-Man-(1-&gt;3)-[beta-D-GlcNAc-(1-&gt;2)-alpha-D-Man-(1-&gt;6)]-beta-D-Man-(1-&gt;4)-beta-D-GlcNAc-(1-&gt;4)-beta-D-GlcNAc}-L-asparaginyl-[protein] + UDP + H(+). The catalysed reaction is an N(4)-{beta-D-GlcNAc-(1-&gt;2)-alpha-D-Man-(1-&gt;3)-[alpha-D-Man-(1-&gt;6)]-beta-D-Man-(1-&gt;4)-beta-D-GlcNAc-(1-&gt;4)-beta-D-GlcNAc}-L-asparaginyl-[protein] + UDP-N-acetyl-alpha-D-glucosamine = an N(4)-{beta-D-GlcNAc-(1-&gt;2)-[beta-D-GlcNAc-(1-&gt;4)]-alpha-D-Man-(1-&gt;3)-[alpha-D-Man-(1-&gt;6)]-beta-D-Man-(1-&gt;4)-beta-D-GlcNAc-(1-&gt;4)-beta-D-GlcNAc}-L-asparaginyl-[protein] + UDP + H(+). It carries out the reaction an N(4)-{beta-D-GlcNAc-(1-&gt;2)-alpha-D-Man-(1-&gt;3)-[beta-D-GlcNAc-(1-&gt;2)-[beta-D-GlcNAc-(1-&gt;6)]-alpha-D-Man-(1-&gt;6)]-beta-D-Man-(1-&gt;4)-beta-D-GlcNAc-(1-&gt;4)-beta-D-GlcNAc}-L-asparaginyl-[protein] + UDP-N-acetyl-alpha-D-glucosamine = an N(4)-{beta-D-GlcNAc-(1-&gt;2)-[beta-D-GlcNAc-(1-&gt;4)]-alpha-D-Man-(1-&gt;3)-[beta-D-GlcNAc-(1-&gt;2)-[beta-D-GlcNAc-(1-&gt;6)]-alpha-D-Man-(1-&gt;6)]-beta-D-Man-(1-&gt;4)-beta-D-GlcNAc-(1-&gt;4)-beta-D-GlcNAc}-L-asparaginyl-[protein] + UDP + H(+). The enzyme catalyses an N(4)-{beta-D-GlcNAc-(1-&gt;2)-alpha-D-Man-(1-&gt;3)-[beta-D-GlcNAc-(1-&gt;2)-alpha-D-Man-(1-&gt;6)]-beta-D-Man-(1-&gt;4)-beta-D-GlcNAc-(1-&gt;4)-[alpha-L-Fuc-(1-&gt;6)]-beta-D-GlcNAc}-L-asparaginyl-[protein] + UDP-N-acetyl-alpha-D-glucosamine = N(4)-{beta-D-GlcNAc-(1-&gt;2)-[beta-D-GlcNAc-(1-&gt;4)]-alpha-D-Man-(1-&gt;3)-[beta-D-GlcNAc-(1-&gt;2)-alpha-D-Man-(1-&gt;6)]-beta-D-Man-(1-&gt;4)-beta-D-GlcNAc-(1-&gt;4)-[alpha-L-Fuc-(1-&gt;6)]-beta-D-GlcNAc}-asparaginyl-[protein] + UDP + H(+). It catalyses the reaction an N(4)-{beta-D-GlcNAc-(1-&gt;2)-alpha-D-Man-(1-&gt;3)-[beta-D-Gal-(1-&gt;4)-beta-D-GlcNAc-(1-&gt;2)-alpha-D-Man-(1-&gt;6)]-beta-D-Man-(1-&gt;4)-beta-D-GlcNAc-(1-&gt;4)-beta-D-GlcNAc}-L-asparaginyl-[protein] + UDP-N-acetyl-alpha-D-glucosamine = an N(4)-{beta-D-GlcNAc-(1-&gt;2)-[beta-D-GlcNAc-(1-&gt;4)]-alpha-D-Man-(1-&gt;3)-[beta-D-Gal-(1-&gt;4)-beta-D-GlcNAc-(1-&gt;2)-alpha-D-Man-(1-&gt;6)]-beta-D-Man-(1-&gt;4)-beta-D-GlcNAc-(1-&gt;4)-beta-D-GlcNAc}-L-asparaginyl-[protein] + UDP + H(+). The catalysed reaction is N(4)-{beta-D-GlcNAc-(1-&gt;2)-alpha-D-Man-(1-&gt;3)-[alpha-D-Man-(1-&gt;3)-{alpha-D-Man-(1-&gt;6)}-alpha-D-Man-(1-&gt;6)]-beta-D-Man-(1-&gt;4)-beta-D-GlcNAc-(1-&gt;4)-beta-D-GlcNAc}-asparaginyl-[protein] + UDP-N-acetyl-alpha-D-glucosamine = N(4)-{beta-D-GlcNAc-(1-&gt;2)-[beta-D-GlcNAc-(1-&gt;4)]-alpha-D-Man-(1-&gt;3)-[alpha-D-Man-(1-&gt;3)-{alpha-D-Man-(1-&gt;6)}-alpha-D-Man-(1-&gt;6)]-beta-D-Man-(1-&gt;4)-beta-D-GlcNAc-(1-&gt;4)-beta-D-GlcNAc}-asparaginyl-[protein] + UDP + H(+). It carries out the reaction N(4)-{beta-D-GlcNAc-(1-&gt;2)-alpha-D-Man-(1-&gt;3)-beta-D-Man-(1-&gt;4)-beta-D-GlcNAc-(1-&gt;4)-beta-D-GlcNAc}-asparaginyl-[protein] + UDP-N-acetyl-alpha-D-glucosamine = N(4)-{beta-D-GlcNAc-(1-&gt;2)-[beta-D-GlcNAc-(1-&gt;4)]-alpha-D-Man-(1-&gt;3)-beta-D-Man-(1-&gt;4)-beta-D-GlcNAc-(1-&gt;4)-beta-D-GlcNAc}-asparaginyl-[protein] + UDP + H(+). The protein operates within protein modification; protein glycosylation. With respect to regulation, inhibited by UDP. Functionally, glycosyltransferase that catalyze the transfer of GlcNAc from UDP-GlcNAc to the GlcNAcbeta1-2Manalpha1-3 arm of the core structure of N-linked glycans through a beta1-4 linkage and participates in the production of tri- and tetra-antennary N-linked sugar chains. Involved in glucose transport by mediating SLC2A2/GLUT2 glycosylation, thereby controlling cell-surface expression of SLC2A2 in pancreatic beta cells. This chain is Alpha-1,3-mannosyl-glycoprotein 4-beta-N-acetylglucosaminyltransferase A, found in Xenopus tropicalis (Western clawed frog).